A 128-amino-acid polypeptide reads, in one-letter code: Modulator protein MzrA (128 aa).

The Cytoplasmic portion of the chain corresponds to 1-11 (MMVMKRPSLRQ). Residues 12–32 (FSWLLGGSLLLGALFWLWLAV) form a helical membrane-spanning segment. Topologically, residues 33-128 (QQQEATLAIR…RLRDAPHRLG (96 aa)) are periplasmic.

This sequence belongs to the MzrA family. In terms of assembly, interacts with EnvZ.

It localises to the cell inner membrane. Modulates the activity of the EnvZ/OmpR two-component regulatory system, probably by directly modulating EnvZ enzymatic activity and increasing stability of phosphorylated OmpR. The polypeptide is Modulator protein MzrA (Klebsiella pneumoniae subsp. pneumoniae (strain ATCC 700721 / MGH 78578)).